The chain runs to 462 residues: Proteases secretion protein PrtF (462 aa).

Positions 1–23 are cleaved as a signal peptide; it reads MRRKAVLLTVVLSLSGGSAQAMG.

It belongs to the outer membrane factor (OMF) (TC 1.B.17) family.

The protein localises to the cell outer membrane. In terms of biological role, involved in the secretion of proteases A, B, C and G. In Dickeya chrysanthemi (Pectobacterium chrysanthemi), this protein is Proteases secretion protein PrtF (prtF).